Reading from the N-terminus, the 302-residue chain is Exodeoxyribonuclease (302 aa).

The enzyme catalyses Exonucleolytic cleavage in the 5'- to 3'-direction to yield nucleoside 5'-phosphates.. This enzyme is essential for phage DNA replication; it is believed to function in the removal of DNA-linked RNA primers. It is also necessary for host DNA degradation and phage genetic recombination. The protein is Exodeoxyribonuclease (6) of Enterobacteria phage T3 (Bacteriophage T3).